Reading from the N-terminus, the 682-residue chain is Amphiphysin (682 aa).

2 coiled-coil regions span residues 10 to 84 and 144 to 191; these read AKNV…LHEV and DYDS…QEEL. In terms of domain architecture, BAR spans 24 to 240; that stretch reads VLQKLGKADE…MTKLGDQHAD (217 aa). Disordered regions lie at residues 244–310, 446–470, 501–530, and 561–606; these read TIQG…PKLT, ILAEPDEPTEQAAESIEAGDKETTG, GAVRTEQEAAAEGDKPQGEEKDVDVSQEKV, and AAAE…ASDM. A compositionally biased stretch (pro residues) spans 261–274; it reads PSPPEEVSPLPSPT. Basic and acidic residues predominate over residues 503–527; that stretch reads VRTEQEAAAEGDKPQGEEKDVDVSQ. Over residues 567-596 the composition is skewed to polar residues; that stretch reads TQGTDSETSQIGSEQKATEEIQTTPSQDQP. One can recognise an SH3 domain in the interval 609 to 682; it reads GFLFKVEVLH…FPENFTRHLE (74 aa).

As to quaternary structure, heterodimer with BIN1. Binds SH3GLB1. Is abundant in the forebrain and cerebellum. It is also found in the adrenal gland, anterior and posterior pituitary.

It localises to the cytoplasmic vesicle. It is found in the secretory vesicle. The protein localises to the synaptic vesicle membrane. Its subcellular location is the cytoplasm. The protein resides in the cytoskeleton. In terms of biological role, may participate in mechanisms of regulated exocytosis in synapses and certain endocrine cell types. May control the properties of the membrane associated cytoskeleton. The chain is Amphiphysin (AMPH) from Gallus gallus (Chicken).